Here is a 256-residue protein sequence, read N- to C-terminus: UPF0246 protein PG_1544 (256 aa).

Belongs to the UPF0246 family.

This is UPF0246 protein PG_1544 from Porphyromonas gingivalis (strain ATCC BAA-308 / W83).